Reading from the N-terminus, the 467-residue chain is MAKSKSSQGASGARRKPAPSLYQHISSFKPQFSTRVDDVLHFSKTLTWRSEIIPDKSKGTLTTSLLYSQGSDIYEIDTTLPLKTFYDDDDDDDNDDDDEEGNGKTKSAATPNPEYGDAFQDVEGKPLRPKWIYQGETVAKMQYLESSDDSTAIAMSKNGSLAWFRDEIKVPVHIVQEMMGPATRYSSIHSLTRPGSLAVSDFDVSTNMDTVVKSQSNGYEEDSILKIIDNSDRPGDILRTVHVPGTNVAHSVRFFNNHLFASCSDDNILRFWDTRTADKPLWTLSEPKNGRLTSFDSSQVTENLFVTGFSTGVIKLWDARAVQLATTDLTHRQNGEEPIQNEIAKLFHSGGDSVVDILFSQTSATEFVTVGGTGNVYHWDMEYSFSRNDDDNEDEVRVAAPEELQGQCLKFFHTGGTRRSSNQFGKRNTVALHPVINDFVGTVDSDSLVTAYKPFLASDFIGRGYDD.

Positions 1-12 are enriched in low complexity; that stretch reads MAKSKSSQGASG. Disordered regions lie at residues 1-22 and 84-121; these read MAKS…PSLY and TFYD…AFQD. Positions 87–100 are enriched in acidic residues; it reads DDDDDDDNDDDDEE. 3 WD repeats span residues 244-282, 287-327, and 349-389; these read PGTN…KPLW, PKNG…LATT, and SGGD…SRND.

Functionally, transcriptional modulator with roles in meiotic regulation and silencing. This is Transcriptional modulator WTM2 (WTM2) from Saccharomyces cerevisiae (strain ATCC 204508 / S288c) (Baker's yeast).